A 245-amino-acid polypeptide reads, in one-letter code: 1-(5-phosphoribosyl)-5-[(5-phosphoribosylamino)methylideneamino] imidazole-4-carboxamide isomerase (245 aa).

The Proton acceptor role is filled by aspartate 8. The active-site Proton donor is the aspartate 130.

The protein belongs to the HisA/HisF family.

Its subcellular location is the cytoplasm. The enzyme catalyses 1-(5-phospho-beta-D-ribosyl)-5-[(5-phospho-beta-D-ribosylamino)methylideneamino]imidazole-4-carboxamide = 5-[(5-phospho-1-deoxy-D-ribulos-1-ylimino)methylamino]-1-(5-phospho-beta-D-ribosyl)imidazole-4-carboxamide. It participates in amino-acid biosynthesis; L-histidine biosynthesis; L-histidine from 5-phospho-alpha-D-ribose 1-diphosphate: step 4/9. The protein is 1-(5-phosphoribosyl)-5-[(5-phosphoribosylamino)methylideneamino] imidazole-4-carboxamide isomerase of Teredinibacter turnerae (strain ATCC 39867 / T7901).